Consider the following 376-residue polypeptide: 3-aminomethylindole N-methyltransferase (376 aa).

Residues Gly-220, Asp-243, Asp-263, and Met-264 each coordinate S-adenosyl-L-homocysteine.

It belongs to the class I-like SAM-binding methyltransferase superfamily. Cation-independent O-methyltransferase family. In terms of tissue distribution, more present in the fifth leaf than in the second leaf (at protein level).

It carries out the reaction 3-(aminomethyl)indole + 2 S-adenosyl-L-methionine = gramine + 2 S-adenosyl-L-homocysteine + 2 H(+). Its pathway is alkaloid biosynthesis. With respect to regulation, repressed by sodium carbonate, sodium bicarbonate and K-phosphate. Its function is as follows. Methylates 3-aminomethylindole (AMI) and N-methyl-3-aminomethylindole (MAMI), two substrates involved in gramine biosynthesis, a toxic indole alkaloid. Can use S-adenosyl-L-methionine (AdoMet) as a methyl donor. Unable to mediate caffeic acid O-methylation. This chain is 3-aminomethylindole N-methyltransferase, found in Hordeum vulgare subsp. vulgare (Domesticated barley).